Reading from the N-terminus, the 140-residue chain is Acyl-coenzyme A thioesterase 13 (140 aa).

M1 is modified (N-acetylmethionine). The residue at position 2 (T2) is an N-acetylthreonine; in Acyl-coenzyme A thioesterase 13, N-terminally processed. 3 positions are modified to N6-acetyllysine: K27, K37, and K43. E46 is a binding site for CoA. The substrate site is built by N50 and G81. Residues S83, 90 to 95 (YMSPAK), and 108 to 113 (KQGKTL) each bind CoA. 2 positions are modified to N6-acetyllysine: K108 and K127. H137 serves as a coordination point for CoA.

Belongs to the thioesterase PaaI family. In terms of assembly, homotetramer. Interacts with PCTP.

It is found in the cytoplasm. The protein resides in the cytosol. The protein localises to the mitochondrion. It localises to the nucleus. Its subcellular location is the cytoskeleton. It is found in the spindle. It catalyses the reaction a fatty acyl-CoA + H2O = a fatty acid + CoA + H(+). The enzyme catalyses decanoyl-CoA + H2O = decanoate + CoA + H(+). The catalysed reaction is octanoyl-CoA + H2O = octanoate + CoA + H(+). It carries out the reaction butanoyl-CoA + H2O = butanoate + CoA + H(+). It catalyses the reaction hexanoyl-CoA + H2O = hexanoate + CoA + H(+). The enzyme catalyses tetradecanoyl-CoA + H2O = tetradecanoate + CoA + H(+). The catalysed reaction is hexadecanoyl-CoA + H2O = hexadecanoate + CoA + H(+). It carries out the reaction dodecanoyl-CoA + H2O = dodecanoate + CoA + H(+). It catalyses the reaction (9Z)-octadecenoyl-CoA + H2O = (9Z)-octadecenoate + CoA + H(+). The enzyme catalyses (5Z,8Z,11Z,14Z)-eicosatetraenoyl-CoA + H2O = (5Z,8Z,11Z,14Z)-eicosatetraenoate + CoA + H(+). Catalyzes the hydrolysis of acyl-CoAs into free fatty acids and coenzyme A (CoASH), regulating their respective intracellular levels. Has acyl-CoA thioesterase activity towards medium (C12) and long-chain (C18) fatty acyl-CoA substrates. Can also hydrolyze 3-hydroxyphenylacetyl-CoA and 3,4-dihydroxyphenylacetyl-CoA (in vitro). May play a role in controlling adaptive thermogenesis. This is Acyl-coenzyme A thioesterase 13 from Homo sapiens (Human).